The primary structure comprises 570 residues: Urease subunit alpha 1 (570 aa).

Positions Gly131–Phe570 constitute a Urease domain. Ni(2+)-binding residues include His136, His138, and Lys219. At Lys219 the chain carries N6-carboxylysine. His221 lines the substrate pocket. Ni(2+)-binding residues include His248 and His274. The Proton donor role is filled by His322. Ni(2+) is bound at residue Asp362.

This sequence belongs to the metallo-dependent hydrolases superfamily. Urease alpha subunit family. Heterotrimer of UreA (gamma), UreB (beta) and UreC (alpha) subunits. Three heterotrimers associate to form the active enzyme. Ni cation is required as a cofactor. In terms of processing, carboxylation allows a single lysine to coordinate two nickel ions.

It is found in the cytoplasm. It catalyses the reaction urea + 2 H2O + H(+) = hydrogencarbonate + 2 NH4(+). It participates in nitrogen metabolism; urea degradation; CO(2) and NH(3) from urea (urease route): step 1/1. Its function is as follows. Disrupting the ure1 operon causes loss of urease activity, decreased resistance to low pH killing in vitro and decreased pathogen survival when inoculated in BALB/c mice by gavage. This chain is Urease subunit alpha 1, found in Brucella suis biovar 1 (strain 1330).